The chain runs to 545 residues: Glutamyl-tRNA(Gln) amidotransferase subunit B-1, chloroplastic/mitochondrial (545 aa).

It belongs to the GatB/GatE family. GatB subfamily. Subunit of the heterotrimeric GatCAB amidotransferase (AdT) complex, composed of A, B and C subunits.

The protein localises to the mitochondrion. It localises to the plastid. Its subcellular location is the chloroplast. It catalyses the reaction L-glutamyl-tRNA(Gln) + L-glutamine + ATP + H2O = L-glutaminyl-tRNA(Gln) + L-glutamate + ADP + phosphate + H(+). Functionally, allows the formation of correctly charged Gln-tRNA(Gln) through the transamidation of misacylated Glu-tRNA(Gln) in chloroplasts and mitochondria. The reaction takes place in the presence of glutamine and ATP through an activated gamma-phospho-Glu-tRNA(Gln). The chain is Glutamyl-tRNA(Gln) amidotransferase subunit B-1, chloroplastic/mitochondrial from Micromonas pusilla (strain CCMP1545) (Picoplanktonic green alga).